Reading from the N-terminus, the 139-residue chain is ATP synthase epsilon chain (139 aa).

This sequence belongs to the ATPase epsilon chain family. F-type ATPases have 2 components, CF(1) - the catalytic core - and CF(0) - the membrane proton channel. CF(1) has five subunits: alpha(3), beta(3), gamma(1), delta(1), epsilon(1). CF(0) has three main subunits: a, b and c.

Its subcellular location is the cell inner membrane. In terms of biological role, produces ATP from ADP in the presence of a proton gradient across the membrane. In Erwinia tasmaniensis (strain DSM 17950 / CFBP 7177 / CIP 109463 / NCPPB 4357 / Et1/99), this protein is ATP synthase epsilon chain.